Consider the following 284-residue polypeptide: D-tagatose-1,6-bisphosphate aldolase subunit GatY (284 aa).

Asp-82 serves as the catalytic Proton donor. Zn(2+) is bound by residues His-83 and His-180. Gly-181 provides a ligand contact to dihydroxyacetone phosphate. His-208 serves as a coordination point for Zn(2+). Residues Gly-209–Ser-211 and Asn-230–Thr-233 contribute to the dihydroxyacetone phosphate site.

It belongs to the class II fructose-bisphosphate aldolase family. TagBP aldolase GatY subfamily. As to quaternary structure, forms a complex with GatZ. Zn(2+) is required as a cofactor.

It catalyses the reaction D-tagatofuranose 1,6-bisphosphate = D-glyceraldehyde 3-phosphate + dihydroxyacetone phosphate. It participates in carbohydrate metabolism; D-tagatose 6-phosphate degradation; D-glyceraldehyde 3-phosphate and glycerone phosphate from D-tagatose 6-phosphate: step 2/2. Its function is as follows. Catalytic subunit of the tagatose-1,6-bisphosphate aldolase GatYZ, which catalyzes the reversible aldol condensation of dihydroxyacetone phosphate (DHAP or glycerone-phosphate) with glyceraldehyde 3-phosphate (G3P) to produce tagatose 1,6-bisphosphate (TBP). Requires GatZ subunit for full activity and stability. Is involved in the catabolism of galactitol. This is D-tagatose-1,6-bisphosphate aldolase subunit GatY from Escherichia coli (strain SMS-3-5 / SECEC).